The sequence spans 313 residues: Ribosomal RNA small subunit methyltransferase H (313 aa).

S-adenosyl-L-methionine is bound by residues 35-37 (GGH), D55, F79, D101, and Q108.

The protein belongs to the methyltransferase superfamily. RsmH family.

The protein resides in the cytoplasm. The catalysed reaction is cytidine(1402) in 16S rRNA + S-adenosyl-L-methionine = N(4)-methylcytidine(1402) in 16S rRNA + S-adenosyl-L-homocysteine + H(+). Functionally, specifically methylates the N4 position of cytidine in position 1402 (C1402) of 16S rRNA. In Salmonella newport (strain SL254), this protein is Ribosomal RNA small subunit methyltransferase H.